The sequence spans 619 residues: MLLASAVVVWEWLNEHGRWRPYSPAVSHHIEAVVRAGPRAGGSVVLGQVDSRLAPYIIDLQSMNQFRQDTGTLRPVRRNYYDPSSAPGKGVVWEWENDNGSWTPYDMEVGITIQHAYEKQHPWIDLTSIGFSYVIDFNTMGQINRQTQRQRRVRRRLDLIYPMVTGTLPKAQSWPVSPGPATSPPMSPCSCPQCVLVMSVKAAVVNGSTGPLQLPVTRKNMPPPGVVKLPPLPGSGAKPLDSTGTIRGPLKTAPSQVIRRQASSMPTGTTMGSPASPPGPNSKTGRVALATLNRTNLQRLAIAQSRVLIASGVPTVPVKNLNGSSPVNPALAGITGILMSAAGLPVCLTRPPKLVLHPPPVSKSEIKSIPGVSNTSRKTTKKQAKKGKTPEEVLKKYLQKVRHPPDEDCTICMERLTAPSGYKGPQPTVKPDLVGKLSRCGHVYHIYCLVAMYNNGNKDGSLQCPTCKTIYGVKTGTQPPGKMEYHLIPHSLPGHPDCKTIRIIYSIPPGIQGPEHPNPGKSFSARGFPRHCYLPDSEKGRKVLKLLLVAWDRRLIFAIGTSSTTGESDTVIWNEVHHKTEFGSNLTGHGYPDANYLDNVLAELAAQGISEDSTAQEKD.

2 WWE domains span residues 1–78 and 79–155; these read MLLA…PVRR and NYYD…RVRR. Disordered stretches follow at residues 238-281 and 358-389; these read KPLD…PGPN and PPPV…KGKT. Residues 261-273 show a composition bias toward polar residues; the sequence is QASSMPTGTTMGS. Over residues 378-387 the composition is skewed to basic residues; it reads KTTKKQAKKG. The segment at 409–468 adopts an RING-type; atypical zinc-finger fold; that stretch reads CTICMERLTAPSGYKGPQPTVKPDLVGKLSRCGHVYHIYCLVAMYNNGNKDGSLQCPTCK.

The protein belongs to the Deltex family. As to quaternary structure, interacts with NLRP4.

The protein localises to the cytoplasm. The catalysed reaction is S-ubiquitinyl-[E2 ubiquitin-conjugating enzyme]-L-cysteine + [acceptor protein]-L-lysine = [E2 ubiquitin-conjugating enzyme]-L-cysteine + N(6)-ubiquitinyl-[acceptor protein]-L-lysine.. Its pathway is protein modification; protein ubiquitination. Functionally, regulator of Notch signaling, a signaling pathway involved in cell-cell communications that regulates a broad spectrum of cell-fate determinations. Functions as a ubiquitin ligase protein in vivo, mediating 'Lys48'-linked polyubiquitination and promoting degradation of TBK1, targeting to TBK1 requires interaction with NLRP4. The chain is E3 ubiquitin-protein ligase DTX4 (DTX4) from Homo sapiens (Human).